Consider the following 540-residue polypeptide: Acetyl-coenzyme A carboxylase carboxyl transferase subunit beta, chloroplastic (540 aa).

Residues 229 to 249 (YSDNGSSSIRTRTSTSSGSSY) are disordered. Residues 233-248 (GSSSIRTRTSTSSGSS) show a composition bias toward low complexity. Residues 267 to 538 (LWVQCENCYA…TFHPLKSNKV (272 aa)) form the CoA carboxyltransferase N-terminal domain. Cys-271, Cys-274, Cys-290, and Cys-293 together coordinate Zn(2+). Residues 271–293 (CENCYALNYNKLFRSKMNVCEQC) form a C4-type zinc finger.

This sequence belongs to the AccD/PCCB family. In terms of assembly, acetyl-CoA carboxylase is a heterohexamer composed of biotin carboxyl carrier protein, biotin carboxylase and 2 subunits each of ACCase subunit alpha and ACCase plastid-coded subunit beta (accD). Requires Zn(2+) as cofactor.

It is found in the plastid. The protein resides in the chloroplast stroma. The enzyme catalyses N(6)-carboxybiotinyl-L-lysyl-[protein] + acetyl-CoA = N(6)-biotinyl-L-lysyl-[protein] + malonyl-CoA. It functions in the pathway lipid metabolism; malonyl-CoA biosynthesis; malonyl-CoA from acetyl-CoA: step 1/1. Functionally, component of the acetyl coenzyme A carboxylase (ACC) complex. Biotin carboxylase (BC) catalyzes the carboxylation of biotin on its carrier protein (BCCP) and then the CO(2) group is transferred by the transcarboxylase to acetyl-CoA to form malonyl-CoA. The polypeptide is Acetyl-coenzyme A carboxylase carboxyl transferase subunit beta, chloroplastic (Amborella trichopoda).